The primary structure comprises 523 residues: Tubulin-specific chaperone E (523 aa).

The region spanning 31 to 75 (GEVSGHMGSWLGIEWDDGLRGKHNGIVDGKRYFQTQTPTGGSFIR) is the CAP-Gly domain. 7 LRR repeats span residues 155–180 (LTHL…IAQQ), 181–204 (LPSL…QITE), 209–232 (FRQL…MHTA), 235–258 (WPNI…DRTK), 260–284 (FKQL…KLGN), 285–310 (LTTL…DSQE), and 315–337 (FVSL…AFNE).

It belongs to the TBCE family.

The protein resides in the cytoplasm. Tubulin-folding protein which is required for the development of the neuronal microtubule network. Essential for the development and function of neuromuscular synapses. Likely to promote microtubule formation by acting in the negative regulation of the microtubule-severing protein spas. The chain is Tubulin-specific chaperone E from Drosophila melanogaster (Fruit fly).